The primary structure comprises 304 residues: Recombination-associated protein RdgC (304 aa).

It belongs to the RdgC family.

The protein localises to the cytoplasm. The protein resides in the nucleoid. In terms of biological role, may be involved in recombination. This Shewanella baltica (strain OS185) protein is Recombination-associated protein RdgC.